Reading from the N-terminus, the 191-residue chain is MKDKHNQEHDHLSQEEPESCEKACACKEQQGEEMQEASGKECEIKEDFELKYQEMHEKYLRVHADFENVKKRLERDKSMALEYAYEKIALDLLPVIDALLGAHRSAAEVDKESALTKGLELTMEKLHEVLARHGIEGIECLEEFDPNFHNAIMQVKSEEKENGKIVQVLQQGYKYKGRVLRPAMVSIAKND.

A disordered region spans residues 1-22 (MKDKHNQEHDHLSQEEPESCEK).

This sequence belongs to the GrpE family. In terms of assembly, homodimer.

Its subcellular location is the cytoplasm. Functionally, participates actively in the response to hyperosmotic and heat shock by preventing the aggregation of stress-denatured proteins, in association with DnaK and GrpE. It is the nucleotide exchange factor for DnaK and may function as a thermosensor. Unfolded proteins bind initially to DnaJ; upon interaction with the DnaJ-bound protein, DnaK hydrolyzes its bound ATP, resulting in the formation of a stable complex. GrpE releases ADP from DnaK; ATP binding to DnaK triggers the release of the substrate protein, thus completing the reaction cycle. Several rounds of ATP-dependent interactions between DnaJ, DnaK and GrpE are required for fully efficient folding. The sequence is that of Protein GrpE from Helicobacter pylori (strain Shi470).